The sequence spans 346 residues: Glycerol-1-phosphate dehydrogenase [NAD(P)+] (346 aa).

NAD(+) is bound by residues 93-97 and 115-118; these read GTIID and TTAS. A substrate-binding site is contributed by D120. S124 is a binding site for NAD(+). Position 167 (D167) interacts with substrate. 2 residues coordinate Zn(2+): D167 and H247. H251 contacts substrate. Position 263 (H263) interacts with Zn(2+).

Belongs to the glycerol-1-phosphate dehydrogenase family. It depends on Zn(2+) as a cofactor.

The protein localises to the cytoplasm. The enzyme catalyses sn-glycerol 1-phosphate + NAD(+) = dihydroxyacetone phosphate + NADH + H(+). The catalysed reaction is sn-glycerol 1-phosphate + NADP(+) = dihydroxyacetone phosphate + NADPH + H(+). It participates in membrane lipid metabolism; glycerophospholipid metabolism. Functionally, catalyzes the NAD(P)H-dependent reduction of dihydroxyacetonephosphate (DHAP or glycerone phosphate) to glycerol 1-phosphate (G1P). The G1P thus generated is used as the glycerophosphate backbone of phospholipids in the cellular membranes of Archaea. This chain is Glycerol-1-phosphate dehydrogenase [NAD(P)+], found in Pyrococcus furiosus (strain ATCC 43587 / DSM 3638 / JCM 8422 / Vc1).